A 127-amino-acid polypeptide reads, in one-letter code: MVEVEHWNTLRLRIYIGENDKWEGRPLYKVIVEKLREMGIAGATVYRGIYGFGKKSRVHSSDVIRLSTDLPIIVEVVDRGHNIEKVVNVIKPMIKDGMITVEPTIVLWVGTQEEIKKFEEDAIAERQ.

This sequence belongs to the UPF0166 family.

The chain is UPF0166 protein PH1503 from Pyrococcus horikoshii (strain ATCC 700860 / DSM 12428 / JCM 9974 / NBRC 100139 / OT-3).